The sequence spans 418 residues: Tyrosine--tRNA ligase (418 aa).

An L-tyrosine-binding site is contributed by Y34. A 'HIGH' region motif is present at residues 39–48; sequence PTADSLHLGH. Y169 and Q173 together coordinate L-tyrosine. The 'KMSKS' region motif lies at 229-233; it reads KFGKS. K232 is a binding site for ATP. The S4 RNA-binding domain maps to 352–410; that stretch reads LNIVELLVTSGIVNSKRQAREDVQNGAIYVNGERVQDLDYTLSDSDKIDGELTVIRRGK.

This sequence belongs to the class-I aminoacyl-tRNA synthetase family. TyrS type 1 subfamily. In terms of assembly, homodimer.

The protein localises to the cytoplasm. It carries out the reaction tRNA(Tyr) + L-tyrosine + ATP = L-tyrosyl-tRNA(Tyr) + AMP + diphosphate + H(+). In terms of biological role, catalyzes the attachment of tyrosine to tRNA(Tyr) in a two-step reaction: tyrosine is first activated by ATP to form Tyr-AMP and then transferred to the acceptor end of tRNA(Tyr). The sequence is that of Tyrosine--tRNA ligase from Streptococcus suis (strain 98HAH33).